We begin with the raw amino-acid sequence, 149 residues long: Urease accessory protein UreE (149 aa).

The protein belongs to the UreE family.

It is found in the cytoplasm. Involved in urease metallocenter assembly. Binds nickel. Probably functions as a nickel donor during metallocenter assembly. The polypeptide is Urease accessory protein UreE (Prochlorococcus marinus (strain MIT 9301)).